The primary structure comprises 343 residues: Dihydroorotase (343 aa).

The Zn(2+) site is built by His14 and His16. Substrate contacts are provided by residues 16–18 (HVR) and Asn42. Positions 98, 135, and 173 each coordinate Zn(2+). Lys98 is subject to N6-carboxylysine. A substrate-binding site is contributed by His135. Leu219 contributes to the substrate binding site. Asp247 contributes to the Zn(2+) binding site. Residue Asp247 is part of the active site. Substrate is bound by residues His251 and Ala263.

The protein belongs to the metallo-dependent hydrolases superfamily. DHOase family. Class II DHOase subfamily. As to quaternary structure, homodimer. Requires Zn(2+) as cofactor.

It catalyses the reaction (S)-dihydroorotate + H2O = N-carbamoyl-L-aspartate + H(+). The protein operates within pyrimidine metabolism; UMP biosynthesis via de novo pathway; (S)-dihydroorotate from bicarbonate: step 3/3. Functionally, catalyzes the reversible cyclization of carbamoyl aspartate to dihydroorotate. The chain is Dihydroorotase from Marinobacter nauticus (strain ATCC 700491 / DSM 11845 / VT8) (Marinobacter aquaeolei).